The following is a 439-amino-acid chain: Glycosyl hydrolase DigH (439 aa).

Residues 1–27 (MDICSRNEKLAIRRPAILVALALLLCS) form the signal peptide. Cys28 is lipidated: N-palmitoyl cysteine. A lipid anchor (S-diacylglycerol cysteine) is attached at Cys28. Residues 34-54 (ESMVTPPAGSKPPATTQQSSQ) form a disordered region.

It belongs to the glycosyl hydrolase-like 10 (GHL10) family.

It is found in the cell outer membrane. In terms of biological role, divisome-localized glycosyl hydrolase that cleaves peptide-free (denuded) peptidoglycans. The protein is Glycosyl hydrolase DigH of Escherichia coli O6:H1 (strain CFT073 / ATCC 700928 / UPEC).